A 197-amino-acid chain; its full sequence is GTP cyclohydrolase-2 (197 aa).

GTP is bound at residue 50–54 (RIHSE). 3 residues coordinate Zn(2+): Cys55, Cys66, and Cys68. GTP-binding positions include Gln71, 93–95 (EGR), and Thr115. Catalysis depends on Asp127, which acts as the Proton acceptor. Catalysis depends on Arg129, which acts as the Nucleophile. GTP contacts are provided by Thr150 and Lys155.

This sequence belongs to the GTP cyclohydrolase II family. It depends on Zn(2+) as a cofactor.

The catalysed reaction is GTP + 4 H2O = 2,5-diamino-6-hydroxy-4-(5-phosphoribosylamino)-pyrimidine + formate + 2 phosphate + 3 H(+). It functions in the pathway cofactor biosynthesis; riboflavin biosynthesis; 5-amino-6-(D-ribitylamino)uracil from GTP: step 1/4. Functionally, catalyzes the conversion of GTP to 2,5-diamino-6-ribosylamino-4(3H)-pyrimidinone 5'-phosphate (DARP), formate and pyrophosphate. This chain is GTP cyclohydrolase-2, found in Aeromonas hydrophila subsp. hydrophila (strain ATCC 7966 / DSM 30187 / BCRC 13018 / CCUG 14551 / JCM 1027 / KCTC 2358 / NCIMB 9240 / NCTC 8049).